A 135-amino-acid polypeptide reads, in one-letter code: Sex-regulated protein janus-A (135 aa).

Residue Lys-37 participates in substrate binding. The active-site Proton acceptor is the His-63. Residue 104 to 106 (SQG) coordinates substrate.

It belongs to the janus family. As to expression, somatic and germline cells. Isoform B is expressed in both sexes and in somatic and germ line cells. Isoform A is expressed in males and is germ line specific.

Functionally, janA and janB regulate somatic sex differentiation. The protein is Sex-regulated protein janus-A (janA) of Drosophila melanogaster (Fruit fly).